A 391-amino-acid chain; its full sequence is Putative gustatory receptor 36b (391 aa).

The Cytoplasmic portion of the chain corresponds to 1-4; it reads MVDW. The chain crosses the membrane as a helical span at residues 5–25; it reads VVLLLKAVHIYCYLIGLSNFE. Topologically, residues 26–39 are extracellular; it reads FDCRTGRVFKSRRC. The helical transmembrane segment at 40–60 threads the bilayer; that stretch reads TIYAFMANIFILITIIYNFTA. At 61-74 the chain is on the cytoplasmic side; it reads HGDTNLLFQSANKL. Residues 75–95 form a helical membrane-spanning segment; that stretch reads HEYVIIIMSGLKIVAGLITVL. The Extracellular segment spans residues 96–127; it reads NRWLQRGQMMQLVKDVIRLYMINPQLKSMIRW. A helical transmembrane segment spans residues 128–148; sequence GILLKAFISFAIELLQVTLSV. The Cytoplasmic portion of the chain corresponds to 149–165; that stretch reads DALDRQGTAEMMGLLVK. The chain crosses the membrane as a helical span at residues 166–186; it reads LCVSFIMNLAISQHFLVILLI. Residues 187–284 are Extracellular-facing; sequence RAQYRIMNAK…YKYGPHNLKL (98 aa). A helical transmembrane segment spans residues 285 to 305; the sequence is SAKTSIIVCILITLFYLDALV. Residues 306–363 lie on the Cytoplasmic side of the membrane; the sequence is NCNNMLRVLDHHKDFLGLLEERTVFASSLDIRLEESFESLQLQLARNPLKINVMGMFP. A helical transmembrane segment spans residues 364–384; that stretch reads ITRGSTAAMCASVIVNSIFLI. Topologically, residues 385–391 are extracellular; it reads QFDMEFF.

This sequence belongs to the insect chemoreceptor superfamily. Gustatory receptor (GR) family. Gr22e subfamily. In terms of tissue distribution, expressed in neurons of the terminal external chemosensory organ of larvae.

Its subcellular location is the cell membrane. Functionally, probable gustatory receptor which mediates acceptance or avoidance behavior, depending on its substrates. This chain is Putative gustatory receptor 36b (Gr36b), found in Drosophila melanogaster (Fruit fly).